The primary structure comprises 342 residues: Keratin-associated protein 29-1 (342 aa).

A run of 5 repeats spans residues 5–9, 91–95, 239–243, 309–313, and 324–328. Residues 5–328 are 5 X 5 AA repeats of C-C-X(3); that stretch reads CCPENPTAVP…SSGPGCCPPT (324 aa).

The protein belongs to the KRTAP type 10 family.

In Mus musculus (Mouse), this protein is Keratin-associated protein 29-1 (Krtap29-1).